Consider the following 869-residue polypeptide: Valine--tRNA ligase (869 aa).

A 'HIGH' region motif is present at residues 51–61 (PNVTGNLHLGH). Residues 523 to 527 (KMSKS) carry the 'KMSKS' region motif. Lys-526 provides a ligand contact to ATP. Positions 797 to 869 (EDLLGSNNEA…ELEKLLSSHK (73 aa)) form a coiled coil.

It belongs to the class-I aminoacyl-tRNA synthetase family. ValS type 1 subfamily. In terms of assembly, monomer.

It is found in the cytoplasm. The enzyme catalyses tRNA(Val) + L-valine + ATP = L-valyl-tRNA(Val) + AMP + diphosphate. In terms of biological role, catalyzes the attachment of valine to tRNA(Val). As ValRS can inadvertently accommodate and process structurally similar amino acids such as threonine, to avoid such errors, it has a 'posttransfer' editing activity that hydrolyzes mischarged Thr-tRNA(Val) in a tRNA-dependent manner. In Malacoplasma penetrans (strain HF-2) (Mycoplasma penetrans), this protein is Valine--tRNA ligase.